Consider the following 365-residue polypeptide: Delta(7)-sterol 5(6)-desaturase ERG3 (365 aa).

Residues 1-92 (MDLVLEVADH…LLPRSSILRE (92 aa)) lie on the Cytoplasmic side of the membrane. The chain crosses the membrane as a helical span at residues 93 to 113 (FLSLWVIVTIFGLLLYLFTAS). The Lumenal portion of the chain corresponds to 114–140 (LSYVFVFDKSIFNHPRYLKNQMAMEIK). Residues 141-161 (LAVSAIPWMSMLTVPWFVMEL) form a helical membrane-spanning segment. Residues 162-242 (NGHSKLYMKI…VDGFLQSISY (81 aa)) lie on the Cytoplasmic side of the membrane. A Fatty acid hydroxylase domain is found at 187 to 311 (TFIFFTDCGV…FTTLWDRLGG (125 aa)). The Histidine box-1 motif lies at 200-204 (HRWLH). Positions 213 to 217 (HKPHH) match the Histidine box-2 motif. The helical transmembrane segment at 243 to 263 (HIYPLILPLHKVSYLILFTFV) threads the bilayer. The Lumenal segment spans residues 264-365 (NFWTVMIHDG…ENDPNTKKNN (102 aa)). The Histidine box-3 motif lies at 288–292 (HTVHH). Residues lysine 324 and lysine 344 each participate in a glycyl lysine isopeptide (Lys-Gly) (interchain with G-Cter in ubiquitin) cross-link.

This sequence belongs to the sterol desaturase family. In terms of assembly, interacts with ERG28. Fe cation is required as a cofactor.

It localises to the endoplasmic reticulum membrane. The enzyme catalyses episterol + 2 Fe(II)-[cytochrome b5] + O2 + 2 H(+) = 5-dehydroepisterol + 2 Fe(III)-[cytochrome b5] + 2 H2O. The protein operates within steroid metabolism; ergosterol biosynthesis; ergosterol from zymosterol: step 3/5. Functionally, C-5 sterol desaturase; part of the third module of ergosterol biosynthesis pathway that includes the late steps of the pathway. ERG3 catalyzes the introduction of a C-5 double bond in the B ring to produce 5-dehydroepisterol. The third module or late pathway involves the ergosterol synthesis itself through consecutive reactions that mainly occur in the endoplasmic reticulum (ER) membrane. Firstly, the squalene synthase ERG9 catalyzes the condensation of 2 farnesyl pyrophosphate moieties to form squalene, which is the precursor of all steroids. Squalene synthase is crucial for balancing the incorporation of farnesyl diphosphate (FPP) into sterol and nonsterol isoprene synthesis. Secondly, the squalene epoxidase ERG1 catalyzes the stereospecific oxidation of squalene to (S)-2,3-epoxysqualene, which is considered to be a rate-limiting enzyme in steroid biosynthesis. Then, the lanosterol synthase ERG7 catalyzes the cyclization of (S)-2,3 oxidosqualene to lanosterol, a reaction that forms the sterol core. In the next steps, lanosterol is transformed to zymosterol through a complex process involving various demethylation, reduction and desaturation reactions. The lanosterol 14-alpha-demethylase ERG11 (also known as CYP51) catalyzes C14-demethylation of lanosterol to produce 4,4'-dimethyl cholesta-8,14,24-triene-3-beta-ol, which is critical for ergosterol biosynthesis. The C-14 reductase ERG24 reduces the C14=C15 double bond of 4,4-dimethyl-cholesta-8,14,24-trienol to produce 4,4-dimethyl-cholesta-8,24-dienol. 4,4-dimethyl-cholesta-8,24-dienol is substrate of the C-4 demethylation complex ERG25-ERG26-ERG27 in which ERG25 catalyzes the three-step monooxygenation required for the demethylation of 4,4-dimethyl and 4alpha-methylsterols, ERG26 catalyzes the oxidative decarboxylation that results in a reduction of the 3-beta-hydroxy group at the C-3 carbon to an oxo group, and ERG27 is responsible for the reduction of the keto group on the C-3. ERG28 has a role as a scaffold to help anchor ERG25, ERG26 and ERG27 to the endoplasmic reticulum and ERG29 regulates the activity of the iron-containing C4-methylsterol oxidase ERG25. Then, the sterol 24-C-methyltransferase ERG6 catalyzes the methyl transfer from S-adenosyl-methionine to the C-24 of zymosterol to form fecosterol. The C-8 sterol isomerase ERG2 catalyzes the reaction which results in unsaturation at C-7 in the B ring of sterols and thus converts fecosterol to episterol. The sterol-C5-desaturase ERG3 then catalyzes the introduction of a C-5 double bond in the B ring to produce 5-dehydroepisterol. The C-22 sterol desaturase ERG5 further converts 5-dehydroepisterol into ergosta-5,7,22,24(28)-tetraen-3beta-ol by forming the C-22(23) double bond in the sterol side chain. Finally, ergosta-5,7,22,24(28)-tetraen-3beta-ol is substrate of the C-24(28) sterol reductase ERG4 to produce ergosterol. The protein is Delta(7)-sterol 5(6)-desaturase ERG3 of Saccharomyces cerevisiae (strain ATCC 204508 / S288c) (Baker's yeast).